Here is a 193-residue protein sequence, read N- to C-terminus: Phosphoheptose isomerase (193 aa).

In terms of domain architecture, SIS spans 37–193 (LANAFKAGGK…QLIEKEMADQ (157 aa)). A substrate-binding site is contributed by 52 to 54 (NGG). Positions 61 and 65 each coordinate Zn(2+). Substrate contacts are provided by residues E65, 93-94 (ND), 119-121 (STS), S124, and Q172. Zn(2+) contacts are provided by Q172 and H180.

The protein belongs to the SIS family. GmhA subfamily. Homotetramer. The cofactor is Zn(2+).

It localises to the cytoplasm. It carries out the reaction 2 D-sedoheptulose 7-phosphate = D-glycero-alpha-D-manno-heptose 7-phosphate + D-glycero-beta-D-manno-heptose 7-phosphate. Its pathway is carbohydrate biosynthesis; D-glycero-D-manno-heptose 7-phosphate biosynthesis; D-glycero-alpha-D-manno-heptose 7-phosphate and D-glycero-beta-D-manno-heptose 7-phosphate from sedoheptulose 7-phosphate: step 1/1. In terms of biological role, catalyzes the isomerization of sedoheptulose 7-phosphate in D-glycero-D-manno-heptose 7-phosphate. The protein is Phosphoheptose isomerase of Pectobacterium atrosepticum (strain SCRI 1043 / ATCC BAA-672) (Erwinia carotovora subsp. atroseptica).